Consider the following 229-residue polypeptide: Germin-like protein subfamily 1 member 7 (229 aa).

An N-terminal signal peptide occupies residues 1-24; sequence MEGFLRFLVAKAILLALASSFVSC. A disulfide bridge connects residues Cys34 and Cys50. Positions 64–215 constitute a Cupin type-1 domain; it reads SGLNIAGNTI…AFQLDVNVVK (152 aa). An N-linked (GlcNAc...) asparagine glycan is attached at Asn79. Residues His112, His114, Glu119, and His161 each coordinate Mn(2+).

The protein belongs to the germin family. In terms of assembly, oligomer (believed to be a pentamer but probably hexamer).

Its subcellular location is the secreted. The protein localises to the extracellular space. It localises to the apoplast. May play a role in plant defense. Probably has no oxalate oxidase activity even if the active site is conserved. In Arabidopsis thaliana (Mouse-ear cress), this protein is Germin-like protein subfamily 1 member 7.